Reading from the N-terminus, the 124-residue chain is Small ribosomal subunit protein uS12 (124 aa).

Asp-89 carries the 3-methylthioaspartic acid modification.

The protein belongs to the universal ribosomal protein uS12 family. As to quaternary structure, part of the 30S ribosomal subunit. Contacts proteins S8 and S17. May interact with IF1 in the 30S initiation complex.

In terms of biological role, with S4 and S5 plays an important role in translational accuracy. Interacts with and stabilizes bases of the 16S rRNA that are involved in tRNA selection in the A site and with the mRNA backbone. Located at the interface of the 30S and 50S subunits, it traverses the body of the 30S subunit contacting proteins on the other side and probably holding the rRNA structure together. The combined cluster of proteins S8, S12 and S17 appears to hold together the shoulder and platform of the 30S subunit. This is Small ribosomal subunit protein uS12 from Vibrio campbellii (strain ATCC BAA-1116).